The chain runs to 113 residues: Large ribosomal subunit protein bL17 (113 aa).

Belongs to the bacterial ribosomal protein bL17 family. In terms of assembly, part of the 50S ribosomal subunit. Contacts protein L32.

The polypeptide is Large ribosomal subunit protein bL17 (Caldicellulosiruptor bescii (strain ATCC BAA-1888 / DSM 6725 / KCTC 15123 / Z-1320) (Anaerocellum thermophilum)).